We begin with the raw amino-acid sequence, 75 residues long: MISAGVDSSDLAKRGESLIRQSSNRYLTTVRIAFRAKQRRFDDFDGLLEESSVKPVQRAIVELSDEQDQPDLLPG.

This sequence belongs to the RNA polymerase subunit omega family. In cyanobacteria the RNAP catalytic core is composed of 2 alpha, 1 beta, 1 beta', 1 gamma and 1 omega subunit. When a sigma factor is associated with the core the holoenzyme is formed, which can initiate transcription.

It catalyses the reaction RNA(n) + a ribonucleoside 5'-triphosphate = RNA(n+1) + diphosphate. Its function is as follows. Promotes RNA polymerase assembly. Latches the N- and C-terminal regions of the beta' subunit thereby facilitating its interaction with the beta and alpha subunits. This chain is DNA-directed RNA polymerase subunit omega, found in Parasynechococcus marenigrum (strain WH8102).